A 209-amino-acid chain; its full sequence is High frequency lysogenization protein HflD homolog (209 aa).

It belongs to the HflD family.

It is found in the cytoplasm. The protein resides in the cell inner membrane. In Halorhodospira halophila (strain DSM 244 / SL1) (Ectothiorhodospira halophila (strain DSM 244 / SL1)), this protein is High frequency lysogenization protein HflD homolog.